The sequence spans 426 residues: Histidine--tRNA ligase (426 aa).

The protein belongs to the class-II aminoacyl-tRNA synthetase family. As to quaternary structure, homodimer.

It is found in the cytoplasm. The enzyme catalyses tRNA(His) + L-histidine + ATP = L-histidyl-tRNA(His) + AMP + diphosphate + H(+). This Pseudoalteromonas atlantica (strain T6c / ATCC BAA-1087) protein is Histidine--tRNA ligase.